The sequence spans 112 residues: Putative movement protein (112 aa).

A helical transmembrane segment spans residues 27-47 (IGIIMLCIVGIVVLWVLIILC). Residues 77–112 (TGTPFEETGPHRERRWAERRTEATNQNNNDNVNRFS) form a disordered region. Residues 84 to 98 (TGPHRERRWAERRTE) are compositionally biased toward basic and acidic residues. Residues 101–112 (NQNNNDNVNRFS) show a composition bias toward polar residues.

It belongs to the nanovirus movement protein family.

The protein resides in the host cell membrane. May transport viral genome to neighboring plant cells directly through plasmosdesmata, without any budding. The movement protein allows efficient cell to cell propagation, by bypassing the host cell wall barrier. In Subterranean clover stunt virus (strain F) (SCSV), this protein is Putative movement protein (DNA-M).